Consider the following 346-residue polypeptide: Peripherin-2 (346 aa).

Residues Met1 to Asn24 lie on the Cytoplasmic side of the membrane. Residues Trp25–Ile43 traverse the membrane as a helical segment. Residues Glu44–Pro61 are Lumenal-facing. The helical transmembrane segment at Asn62–Lys80 threads the bilayer. Topologically, residues Ile81–Lys99 are cytoplasmic. The helical transmembrane segment at Leu100–Arg123 threads the bilayer. At Gly124 to Ser264 the chain is on the lumenal side. N-linked (GlcNAc...) asparagine glycosylation occurs at Asn229. A helical membrane pass occupies residues Met265–Leu290. Residues Glu291 to Gly346 lie on the Cytoplasmic side of the membrane. The interval Gln341–Gly346 is interaction with MREG.

It belongs to the PRPH2/ROM1 family. As to quaternary structure, homodimer; disulfide-linked. Forms a homotetramer. Forms a heterotetramer with ROM1. Homotetramer and heterotetramer core complexes go on to form higher order complexes by formation of intermolecular disulfide bonds. Interacts with MREG. Interacts with STX3. Interacts with SNAP25. Retina (photoreceptor). In rim region of ROS (rod outer segment) disks.

The protein localises to the membrane. It localises to the cell projection. It is found in the cilium. Its subcellular location is the photoreceptor outer segment. The protein resides in the photoreceptor inner segment. Its function is as follows. Essential for retina photoreceptor outer segment disk morphogenesis, may also play a role with ROM1 in the maintenance of outer segment disk structure. Required for the maintenance of retinal outer nuclear layer thickness. Required for the correct development and organization of the photoreceptor inner segment. The polypeptide is Peripherin-2 (Prph2) (Rattus norvegicus (Rat)).